Reading from the N-terminus, the 240-residue chain is Bidirectional sugar transporter SWEET7c (240 aa).

Residues 1–12 (MVSPDLIRNVVG) are Extracellular-facing. Residues 10-48 (VVGIVGNVISFGLFLSPVPIFWWIIKNKNVQNFKADPIL) form the MtN3/slv 1 domain. The helical transmembrane segment at 13–33 (IVGNVISFGLFLSPVPIFWWI) threads the bilayer. Residues 34 to 46 (IKNKNVQNFKADP) are Cytoplasmic-facing. A helical membrane pass occupies residues 47–67 (ILVVTINGISLVIEAVYLTIF). Over 68–78 (FLFSDKKNKKK) the chain is Extracellular. Residues 79–99 (MGVVLATEALFMAAVAVGVLL) form a helical membrane-spanning segment. Over 100-108 (GAHTHQRRS) the chain is Cytoplasmic. Residues 109-129 (LIVGILCVIFGTIMYSSPLTI) form a helical membrane-spanning segment. Residues 110-191 (IVGILCVIFG…LILYAIYYRT (82 aa)) enclose the MtN3/slv 2 domain. Over 130-140 (MVVKTKSVEYM) the chain is Extracellular. The helical transmembrane segment at 141–161 (PLLLSVVSFLNGLCWTLYALI) threads the bilayer. At 162 to 164 (RFD) the chain is on the cytoplasmic side. Residues 165–185 (IFITIPNGLGVLFAIMQLILY) traverse the membrane as a helical segment. Topologically, residues 186-240 (AIYYRTTPKKQDKNLELPTVAPIAKDTSIVAPVGNDDDVNGSTASHATINITIEP) are extracellular. N-linked (GlcNAc...) asparagine glycosylation is found at Asn-225 and Asn-235.

Belongs to the SWEET sugar transporter family. In terms of assembly, forms homooligomers and/or heterooligomers.

Its subcellular location is the cell membrane. Its function is as follows. Mediates both low-affinity uptake and efflux of sugar across the plasma membrane. The protein is Bidirectional sugar transporter SWEET7c (SWEET7C) of Oryza sativa subsp. indica (Rice).